The primary structure comprises 196 residues: CRISPR-associated exonuclease Cas4 (196 aa).

Cys-23 is a binding site for [4Fe-4S] cluster. Positions 50, 90, and 103 each coordinate Mn(2+). Positions 184, 187, and 193 each coordinate [4Fe-4S] cluster.

Belongs to the CRISPR-associated exonuclease Cas4 family. The cofactor is Mg(2+). [4Fe-4S] cluster is required as a cofactor.

The catalysed reaction is exonucleolytic cleavage in the 5'- to 3'-direction to yield nucleoside 3'-phosphates.. In terms of biological role, CRISPR (clustered regularly interspaced short palindromic repeat) is an adaptive immune system that provides protection against mobile genetic elements (viruses, transposable elements and conjugative plasmids). CRISPR clusters contain sequences complementary to antecedent mobile elements and target invading nucleic acids. CRISPR clusters are transcribed and processed into CRISPR RNA (crRNA). This may be a 5' to 3' ssDNA exonuclease. In Francisella tularensis subsp. novicida (strain U112), this protein is CRISPR-associated exonuclease Cas4.